The sequence spans 227 residues: UPF0758 protein lpg2489 (227 aa).

The region spanning arginine 102–valine 225 is the MPN domain. Residues histidine 173, histidine 175, and aspartate 186 each coordinate Zn(2+). The short motif at histidine 173–aspartate 186 is the JAMM motif element.

It belongs to the UPF0758 family.

The sequence is that of UPF0758 protein lpg2489 from Legionella pneumophila subsp. pneumophila (strain Philadelphia 1 / ATCC 33152 / DSM 7513).